The sequence spans 278 residues: Tryptophan 2,3-dioxygenase (278 aa).

Substrate contacts are provided by residues 47–51 (FIIQH), Y110, and R114. H236 provides a ligand contact to heme. T250 contacts substrate.

Belongs to the tryptophan 2,3-dioxygenase family. As to quaternary structure, homotetramer. Heme serves as cofactor.

It catalyses the reaction L-tryptophan + O2 = N-formyl-L-kynurenine. It functions in the pathway amino-acid degradation; L-tryptophan degradation via kynurenine pathway; L-kynurenine from L-tryptophan: step 1/2. Heme-dependent dioxygenase that catalyzes the oxidative cleavage of the L-tryptophan (L-Trp) pyrrole ring and converts L-tryptophan to N-formyl-L-kynurenine. Catalyzes the oxidative cleavage of the indole moiety. This Ruegeria pomeroyi (strain ATCC 700808 / DSM 15171 / DSS-3) (Silicibacter pomeroyi) protein is Tryptophan 2,3-dioxygenase.